Reading from the N-terminus, the 284-residue chain is Insulin-like growth factor-binding protein 2 (284 aa).

Residues 1–21 form the signal peptide; it reads MGLSRYLLGLLLGVLCTPAPA. An IGFBP N-terminal domain is found at 23 to 106; that stretch reads VLFRCPPCSP…VLGLGTCGKR (84 aa). 6 cysteine pairs are disulfide-bonded: cysteine 27–cysteine 56, cysteine 30–cysteine 58, cysteine 38–cysteine 59, cysteine 47–cysteine 62, cysteine 70–cysteine 83, and cysteine 77–cysteine 103. The disordered stretch occupies residues 108-184; it reads DTEYGSSQER…KSEDKKRPAR (77 aa). Basic and acidic residues predominate over residues 117-127; sequence RGTELPEERSD. Residues 136–145 show a composition bias toward low complexity; the sequence is EAGPAVAGEA. The span at 152–180 shows a compositional bias: basic and acidic residues; sequence KKEMKEIAVTRERANEQQRSKSNKSEDKK. The 83-residue stretch at 184-266 folds into the Thyroglobulin type-1 domain; the sequence is RSLCQLQLDQ…SPTIRGDPEC (83 aa). 3 disulfides stabilise this stretch: cysteine 187-cysteine 221, cysteine 232-cysteine 243, and cysteine 245-cysteine 266. The short motif at 261 to 263 is the Cell attachment site element; that stretch reads RGD.

Interacts with igf1 and igf2.

It is found in the secreted. In terms of biological role, IGF-binding proteins prolong the half-life of the IGFs and have been shown to either inhibit or stimulate the growth promoting effects of the IGFs on cell culture. They alter the interaction of IGFs with their cell surface receptors. The polypeptide is Insulin-like growth factor-binding protein 2 (Xenopus tropicalis (Western clawed frog)).